The chain runs to 225 residues: KDP operon transcriptional regulatory protein KdpE (225 aa).

The 114-residue stretch at 3–116 (NVLIVEDEQA…ELQARLRVAL (114 aa)) folds into the Response regulatory domain. Aspartate 52 carries the 4-aspartylphosphate modification. Positions 126 to 225 (DPLVKFSDVT…ETGIGYRFML (100 aa)) form a DNA-binding region, ompR/PhoB-type.

In terms of processing, phosphorylated by KdpD.

The protein resides in the cytoplasm. In terms of biological role, member of the two-component regulatory system KdpD/KdpE involved in the regulation of the kdp operon. This chain is KDP operon transcriptional regulatory protein KdpE (kdpE), found in Escherichia coli (strain K12).